The primary structure comprises 420 residues: Serine hydroxymethyltransferase (420 aa).

(6S)-5,6,7,8-tetrahydrofolate contacts are provided by residues L121 and 125–127 (GHL). Position 230 is an N6-(pyridoxal phosphate)lysine (K230). Residues E246 and 354–356 (SPF) contribute to the (6S)-5,6,7,8-tetrahydrofolate site.

Belongs to the SHMT family. As to quaternary structure, homodimer. The cofactor is pyridoxal 5'-phosphate.

The protein localises to the cytoplasm. The catalysed reaction is (6R)-5,10-methylene-5,6,7,8-tetrahydrofolate + glycine + H2O = (6S)-5,6,7,8-tetrahydrofolate + L-serine. It participates in one-carbon metabolism; tetrahydrofolate interconversion. Its pathway is amino-acid biosynthesis; glycine biosynthesis; glycine from L-serine: step 1/1. Catalyzes the reversible interconversion of serine and glycine with tetrahydrofolate (THF) serving as the one-carbon carrier. This reaction serves as the major source of one-carbon groups required for the biosynthesis of purines, thymidylate, methionine, and other important biomolecules. Also exhibits THF-independent aldolase activity toward beta-hydroxyamino acids, producing glycine and aldehydes, via a retro-aldol mechanism. This Rickettsia typhi (strain ATCC VR-144 / Wilmington) protein is Serine hydroxymethyltransferase.